Reading from the N-terminus, the 294-residue chain is MNILENINTEKRNPRSLNLDSMSIAEAVSLMIDEEYGVIEALKEQHRNITEVILATSYSLRNGGRIIYIGAGTSGRLGILDAVECPPTFSVDYNTIVGLIAGGEKAFIQAQEGAEDDANFGKEDLQSINLTAKDIVIGIAASGRTPYVIGALEYANSIGATTVAISCTKQAKISKYAKYSIEAVPGPEVLTGSTRLKAGTTQKLILNMISTLSMVSVGKVYQNLMVDVKPTNQKLIERSKNIVCEATGVDYTTAEKFYLKANKSVKVAIVMILNNCDYEKALAILKNNNNFIKS.

Residues 56–219 (TSYSLRNGGR…STLSMVSVGK (164 aa)) form the SIS domain. Catalysis depends on glutamate 84, which acts as the Proton donor. Residue glutamate 115 is part of the active site.

This sequence belongs to the GCKR-like family. MurNAc-6-P etherase subfamily. As to quaternary structure, homodimer.

It catalyses the reaction N-acetyl-D-muramate 6-phosphate + H2O = N-acetyl-D-glucosamine 6-phosphate + (R)-lactate. Its pathway is amino-sugar metabolism; 1,6-anhydro-N-acetylmuramate degradation. It participates in amino-sugar metabolism; N-acetylmuramate degradation. The protein operates within cell wall biogenesis; peptidoglycan recycling. Specifically catalyzes the cleavage of the D-lactyl ether substituent of MurNAc 6-phosphate, producing GlcNAc 6-phosphate and D-lactate. Together with AnmK, is also required for the utilization of anhydro-N-acetylmuramic acid (anhMurNAc) either imported from the medium or derived from its own cell wall murein, and thus plays a role in cell wall recycling. The sequence is that of N-acetylmuramic acid 6-phosphate etherase from Francisella tularensis subsp. tularensis (strain SCHU S4 / Schu 4).